The primary structure comprises 516 residues: GMP synthase [glutamine-hydrolyzing] (516 aa).

The region spanning 8–198 (KILILDFGSQ…VVNICGCDTL (191 aa)) is the Glutamine amidotransferase type-1 domain. The Nucleophile role is filled by Cys84. Catalysis depends on residues His172 and Glu174. Residues 199–391 (WNIENIIEND…LGLPYNMLYR (193 aa)) enclose the GMPS ATP-PPase domain. 226-232 (SGGVDSS) is an ATP binding site.

In terms of assembly, homodimer.

The catalysed reaction is XMP + L-glutamine + ATP + H2O = GMP + L-glutamate + AMP + diphosphate + 2 H(+). It participates in purine metabolism; GMP biosynthesis; GMP from XMP (L-Gln route): step 1/1. In terms of biological role, catalyzes the synthesis of GMP from XMP. The chain is GMP synthase [glutamine-hydrolyzing] from Francisella tularensis subsp. holarctica (strain LVS).